A 374-amino-acid chain; its full sequence is PqqA peptide cyclase (374 aa).

A Radical SAM core domain is found at 4–224; that stretch reads IEPPMGLLAE…ERLKGVMVID (221 aa). [4Fe-4S] cluster-binding residues include Cys18, Cys22, and Cys25.

This sequence belongs to the radical SAM superfamily. PqqE family. In terms of assembly, interacts with PqqD. The interaction is necessary for activity of PqqE. The cofactor is [4Fe-4S] cluster.

The enzyme catalyses [PQQ precursor protein] + S-adenosyl-L-methionine = E-Y cross-linked-[PQQ precursor protein] + 5'-deoxyadenosine + L-methionine + H(+). Its pathway is cofactor biosynthesis; pyrroloquinoline quinone biosynthesis. Its function is as follows. Catalyzes the cross-linking of a glutamate residue and a tyrosine residue in the PqqA protein as part of the biosynthesis of pyrroloquinoline quinone (PQQ). This Granulibacter bethesdensis (strain ATCC BAA-1260 / CGDNIH1) protein is PqqA peptide cyclase.